Here is a 461-residue protein sequence, read N- to C-terminus: Ornithine decarboxylase (461 aa).

Lys-69 carries the post-translational modification N6-(pyridoxal phosphate)lysine. Residues Ser-200, Gly-237, and 274–277 each bind pyridoxal 5'-phosphate; that span reads EPGR. At Ser-303 the chain carries Phosphoserine; by CK2. 331–332 contributes to the substrate binding site; that stretch reads YD. Cys-360 serves as the catalytic Proton donor; shared with dimeric partner. An S-nitrosocysteine; in inhibited form modification is found at Cys-360. Asp-361 provides a ligand contact to substrate. Tyr-389 serves as a coordination point for pyridoxal 5'-phosphate.

Belongs to the Orn/Lys/Arg decarboxylase class-II family. In terms of assembly, homodimer. Only the dimer is catalytically active, as the active sites are constructed of residues from both monomers. Does not form a heterodimer with AZIN2. Pyridoxal 5'-phosphate is required as a cofactor. Post-translationally, S-Nitrosylation inhibits the enzyme. S-Nitrosylated in vitro on 4 cysteine residues.

The catalysed reaction is L-ornithine + H(+) = putrescine + CO2. The protein operates within amine and polyamine biosynthesis; putrescine biosynthesis via L-ornithine pathway; putrescine from L-ornithine: step 1/1. With respect to regulation, inhibited by S-nitrosylation. Inhibited by antizymes (AZs) OAZ1, OAZ2 and OAZ3 in response to polyamine levels. AZs inhibit the assembly of the functional homodimer by binding to ODC monomers. Additionally, OAZ1 targets ODC monomers for ubiquitin-independent proteolytic destruction by the 26S proteasome. Inhibited by 1-amino-oxy-3-aminopropane (APA, an isosteric analog of putrescine). Irreversibly inhibited by alpha-difluoromethylornithine (DFMO). Functionally, catalyzes the first and rate-limiting step of polyamine biosynthesis that converts ornithine into putrescine, which is the precursor for the polyamines, spermidine and spermine. Polyamines are essential for cell proliferation and are implicated in cellular processes, ranging from DNA replication to apoptosis. The chain is Ornithine decarboxylase (ODC1) from Homo sapiens (Human).